Reading from the N-terminus, the 478-residue chain is Zinc metalloproteinase/disintegrin (478 aa).

Positions 1 to 20 (MIQVLLVTICLAAFPYQGSS) are cleaved as a signal peptide. The propeptide occupies 21 to 187 (IILESGNVND…PIKKASDLNL (167 aa)). In terms of domain architecture, Peptidase M12B spans 193-389 (RYVELFIVVD…QKPQCILKKP (197 aa)). Intrachain disulfides connect C304–C384, C344–C368, and C346–C351. Residue H329 participates in Zn(2+) binding. E330 is an active-site residue. The Zn(2+) site is built by H333 and H339. The propeptide occupies 390-407 (LRTDTVSTPVSGNELLEA). The Disintegrin domain occupies 397–478 (TPVSGNELLE…ADCPRNGLYG (82 aa)). Disulfide bonds link C411–C426, C413–C421, C420–C443, C434–C440, C439–C464, and C452–C471. Residues 456 to 458 (MVD) carry the Cell attachment site; atypical (MVD) motif.

It belongs to the venom metalloproteinase (M12B) family. P-II subfamily. P-IIa sub-subfamily. Monomer (disintegrin). Zn(2+) serves as cofactor. As to expression, expressed by the venom gland.

The protein localises to the secreted. The catalysed reaction is Cleavage of 3-Asn-|-Gln-4, 9-Ser-|-His-10 and 14-Ala-|-Leu-15 bonds in insulin B chain and 14-Tyr-|-Gln-15 and 8-Thr-|-Ser-9 in A chain. Cleaves type IV collagen at 73-Ala-|-Gln-74 in alpha1-(IV) and at 7-Gly-|-Leu-8 in alpha2-(IV).. Snake venom zinc metalloproteinase that causes hemorrhage by provoking the degradation of the sub-endothelial matrix proteins (fibronectin, laminin, type IV collagen, nidogen, and gelatins). Functionally, potent inhibitor of both collagen- (IC(50)=4 nM) and ADP-induced (IC(50)=8 nM) platelet aggregation. May act by binding to the platelet receptor GPIIb/GPIIIa (ITGA2B/ITGB3). The sequence is that of Zinc metalloproteinase/disintegrin from Crotalus atrox (Western diamondback rattlesnake).